The following is a 156-amino-acid chain: Lipoprotein signal peptidase (156 aa).

Helical transmembrane passes span 37–57 (VIPG…FGFL), 68–88 (FFVV…KSAE), and 95–115 (ILGL…RILY). Residues Asp-120 and Asp-138 contribute to the active site. The helical transmembrane segment at 133–153 (AFNVADIAICLGAFAMIVSFY) threads the bilayer.

The protein belongs to the peptidase A8 family.

It is found in the cell inner membrane. The catalysed reaction is Release of signal peptides from bacterial membrane prolipoproteins. Hydrolyzes -Xaa-Yaa-Zaa-|-(S,diacylglyceryl)Cys-, in which Xaa is hydrophobic (preferably Leu), and Yaa (Ala or Ser) and Zaa (Gly or Ala) have small, neutral side chains.. Its pathway is protein modification; lipoprotein biosynthesis (signal peptide cleavage). Functionally, this protein specifically catalyzes the removal of signal peptides from prolipoproteins. The sequence is that of Lipoprotein signal peptidase from Maridesulfovibrio salexigens (strain ATCC 14822 / DSM 2638 / NCIMB 8403 / VKM B-1763) (Desulfovibrio salexigens).